Consider the following 354-residue polypeptide: GTPase Obg (354 aa).

In terms of domain architecture, Obg spans 1 to 159; the sequence is MKFLDQCKIY…LWVWLRLKLI (159 aa). Residues 160 to 328 enclose the OBG-type G domain; it reads ADVGLVGLPN…LLRAAFTQVR (169 aa). GTP contacts are provided by residues 166–173, 191–195, 213–216, 280–283, and 309–311; these read GLPNAGKS, FTTLT, DIPG, NKVD, and SGV. The Mg(2+) site is built by serine 173 and threonine 193. The tract at residues 333-354 is disordered; sequence ETPAEAAIDEAPEEETPGGWQP. Positions 339-348 are enriched in acidic residues; the sequence is AIDEAPEEET.

It belongs to the TRAFAC class OBG-HflX-like GTPase superfamily. OBG GTPase family. As to quaternary structure, monomer. Mg(2+) is required as a cofactor.

The protein localises to the cytoplasm. Functionally, an essential GTPase which binds GTP, GDP and possibly (p)ppGpp with moderate affinity, with high nucleotide exchange rates and a fairly low GTP hydrolysis rate. Plays a role in control of the cell cycle, stress response, ribosome biogenesis and in those bacteria that undergo differentiation, in morphogenesis control. This chain is GTPase Obg, found in Caulobacter sp. (strain K31).